A 258-amino-acid chain; its full sequence is Hydroxyacylglutathione hydrolase cytoplasmic (258 aa).

H54 and H56 together coordinate Zn(2+). Fe cation-binding residues include D58 and H59. The Zn(2+) site is built by H112 and D135. Residue D135 participates in Fe cation binding. Residues 144–146 (KFF) and 174–176 (HEY) contribute to the substrate site. H174 is a binding site for Fe cation.

This sequence belongs to the metallo-beta-lactamase superfamily. Glyoxalase II family. Homodimer. Requires Fe(2+) as cofactor. Zn(2+) serves as cofactor. It depends on Fe(3+) as a cofactor. As to expression, mainly expressed in flowers and flower buds. Also detected in roots and leaves.

The protein localises to the cytoplasm. The catalysed reaction is an S-(2-hydroxyacyl)glutathione + H2O = a 2-hydroxy carboxylate + glutathione + H(+). It functions in the pathway secondary metabolite metabolism; methylglyoxal degradation; (R)-lactate from methylglyoxal: step 2/2. In terms of biological role, thiolesterase that catalyzes the hydrolysis of S-D-lactoyl-glutathione to form glutathione and D-lactic acid. In Arabidopsis thaliana (Mouse-ear cress), this protein is Hydroxyacylglutathione hydrolase cytoplasmic (GLX2-2).